The following is a 316-amino-acid chain: Metal cation efflux system protein CzcD (316 aa).

Residues 1 to 16 are Cytoplasmic-facing; that stretch reads MGAGHSHDHPGGNERS. A helical membrane pass occupies residues 17-37; sequence LKIALALTGTFLIAEVVGGVM. Residues 38 to 46 are Periplasmic-facing; that stretch reads TKSLALISD. A helical transmembrane segment spans residues 47 to 67; the sequence is AAHMLTDTVALAIALAAIAIA. Residues 68 to 81 are Cytoplasmic-facing; the sequence is KRPADKKRTFGYYR. The helical transmembrane segment at 82–102 threads the bilayer; the sequence is FEILAAAFNALLLFGVAIYIL. Over 103–114 the chain is Periplasmic; that stretch reads YEAYLRLKSPPQ. A helical transmembrane segment spans residues 115–135; it reads IESTGMFVVAVLGLIINLISM. Over 136-151 the chain is Cytoplasmic; it reads RMLSSGQSSSLNVKGA. Helical transmembrane passes span 152–172 and 174–194; these read YLEV…AIII and FTGW…WVLP. The Cytoplasmic portion of the chain corresponds to 195–316; sequence RTWILLKSSL…GSKSLAAGGN (122 aa).

It belongs to the cation diffusion facilitator (CDF) transporter (TC 2.A.4) family. SLC30A subfamily.

It is found in the cell inner membrane. With respect to regulation, efflux is inhibited by FCCP. Its function is as follows. Mediates a low-level metal ion resistance, probably by efflux of cations from the cytoplasm into the periplasm. Also mediates resistance to cobalt, cadmium and zinc via regulation of the Czc system. May repress expression of the Czc system by an export of the inducing cations. Binds and transports zinc. Can also bind cobalt, copper and nickel. The polypeptide is Metal cation efflux system protein CzcD (czcD) (Cupriavidus metallidurans (strain ATCC 43123 / DSM 2839 / NBRC 102507 / CH34) (Ralstonia metallidurans)).